The sequence spans 66 residues: Small archaeal modifier protein 2 (66 aa).

Lysine 58 participates in a covalent cross-link: Glycyl lysine isopeptide (Lys-Gly) (interchain with G-Cter in SAMP2). Glycine 66 is modified (1-thioglycine; alternate). The residue at position 66 (glycine 66) is a Glycyl adenylate; alternate. Glycine 66 participates in a covalent cross-link: Glycyl lysine isopeptide (Gly-Lys) (interchain with K-? in acceptor proteins); alternate.

In terms of assembly, monomer. Monomeric and polymeric forms interact with NcsA. The C-terminal glycine is likely acyl-adenylated (-COAMP) by UbaA, and also probably thiocarboxylated (-COSH) to function in sulfur transfer.

Functionally, functions as a protein modifier covalently attached to lysine residues of substrate proteins, as well as a sulfur carrier in tRNA thiolation. The protein modification process is termed sampylation and involves the formation of an isopeptide bond between the SAMP2 C-terminal glycine carboxylate and the epsilon-amino group of lysine residues on target proteins. Is able to form polymeric chains with itself at Lys-58, similar to ubiquitin and other ubiquitin-like proteins. May serve as a proteolytic signal in the cell to target proteins for degradation by proteasomes. In Haloferax volcanii (strain ATCC 29605 / DSM 3757 / JCM 8879 / NBRC 14742 / NCIMB 2012 / VKM B-1768 / DS2) (Halobacterium volcanii), this protein is Small archaeal modifier protein 2 (samp2).